The following is a 337-amino-acid chain: Biotin synthase (337 aa).

The Radical SAM core domain occupies 58–283; the sequence is PEVEVEGIIS…RTILRFAGGR (226 aa). [4Fe-4S] cluster is bound by residues cysteine 73, cysteine 77, and cysteine 80. The [2Fe-2S] cluster site is built by cysteine 116, cysteine 149, cysteine 208, and arginine 278.

The protein belongs to the radical SAM superfamily. Biotin synthase family. In terms of assembly, homodimer. [4Fe-4S] cluster serves as cofactor. Requires [2Fe-2S] cluster as cofactor.

It carries out the reaction (4R,5S)-dethiobiotin + (sulfur carrier)-SH + 2 reduced [2Fe-2S]-[ferredoxin] + 2 S-adenosyl-L-methionine = (sulfur carrier)-H + biotin + 2 5'-deoxyadenosine + 2 L-methionine + 2 oxidized [2Fe-2S]-[ferredoxin]. It participates in cofactor biosynthesis; biotin biosynthesis; biotin from 7,8-diaminononanoate: step 2/2. In terms of biological role, catalyzes the conversion of dethiobiotin (DTB) to biotin by the insertion of a sulfur atom into dethiobiotin via a radical-based mechanism. This chain is Biotin synthase, found in Rhodococcus jostii (strain RHA1).